The chain runs to 444 residues: Signal recognition particle 54 kDa protein (444 aa).

GTP is bound by residues 106-113 (GLQGSGKT), 187-191 (DTAGR), and 245-248 (SKLD).

Belongs to the GTP-binding SRP family. SRP54 subfamily. Part of the signal recognition particle protein translocation system, which is composed of SRP and FtsY. Archaeal SRP consists of a 7S RNA molecule of 300 nucleotides and two protein subunits: SRP54 and SRP19.

The protein localises to the cytoplasm. It carries out the reaction GTP + H2O = GDP + phosphate + H(+). In terms of biological role, involved in targeting and insertion of nascent membrane proteins into the cytoplasmic membrane. Binds to the hydrophobic signal sequence of the ribosome-nascent chain (RNC) as it emerges from the ribosomes. The SRP-RNC complex is then targeted to the cytoplasmic membrane where it interacts with the SRP receptor FtsY. The protein is Signal recognition particle 54 kDa protein of Methanosphaera stadtmanae (strain ATCC 43021 / DSM 3091 / JCM 11832 / MCB-3).